The chain runs to 454 residues: tRNA modification GTPase MnmE (454 aa).

Positions 23, 80, and 120 each coordinate (6S)-5-formyl-5,6,7,8-tetrahydrofolate. Residues 216-377 enclose the TrmE-type G domain; the sequence is GMKVVIAGRP…LRNHLKQSMG (162 aa). Residue asparagine 226 coordinates K(+). GTP-binding positions include 226 to 231, 245 to 251, 270 to 273, 335 to 338, and 358 to 360; these read NAGKSS, TDIAGTT, DTAG, NKAD, and SAR. Position 230 (serine 230) interacts with Mg(2+). The K(+) site is built by threonine 245, isoleucine 247, and threonine 250. Threonine 251 serves as a coordination point for Mg(2+). Position 454 (lysine 454) interacts with (6S)-5-formyl-5,6,7,8-tetrahydrofolate.

Belongs to the TRAFAC class TrmE-Era-EngA-EngB-Septin-like GTPase superfamily. TrmE GTPase family. As to quaternary structure, homodimer. Heterotetramer of two MnmE and two MnmG subunits. Requires K(+) as cofactor.

The protein resides in the cytoplasm. Functionally, exhibits a very high intrinsic GTPase hydrolysis rate. Involved in the addition of a carboxymethylaminomethyl (cmnm) group at the wobble position (U34) of certain tRNAs, forming tRNA-cmnm(5)s(2)U34. This is tRNA modification GTPase MnmE from Citrobacter koseri (strain ATCC BAA-895 / CDC 4225-83 / SGSC4696).